Reading from the N-terminus, the 159-residue chain is Probable acetolactate synthase small subunit (159 aa).

Residues 4-78 form the ACT domain; it reads TIAVLVENKP…ETIKVSEITE (75 aa).

The protein belongs to the acetolactate synthase small subunit family. In terms of assembly, dimer of large and small chains.

The enzyme catalyses 2 pyruvate + H(+) = (2S)-2-acetolactate + CO2. The protein operates within amino-acid biosynthesis; L-isoleucine biosynthesis; L-isoleucine from 2-oxobutanoate: step 1/4. It participates in amino-acid biosynthesis; L-valine biosynthesis; L-valine from pyruvate: step 1/4. This Archaeoglobus fulgidus (strain ATCC 49558 / DSM 4304 / JCM 9628 / NBRC 100126 / VC-16) protein is Probable acetolactate synthase small subunit (ilvH).